Here is an 865-residue protein sequence, read N- to C-terminus: TATA box-binding protein-associated factor RNA polymerase I subunit B (865 aa).

The segment at 1 to 33 adopts an RRN7-type zinc-finger fold; that stretch reads MHSAKNEKCNACGGYRFSVNDGFKYCDRCGALF. Positions 9, 12, 26, and 29 each coordinate Zn(2+). Residues 35–99 are B-reader; that stretch reads NFEELEEEEG…DFLQQQAIKG (65 aa). Residues 100 to 111 form a B-linker region; sequence EELELPHDATPD. Positions 112-348 are N-terminal cyclin fold; sequence YLYRLALRLF…SQPERMKQGE (237 aa). The disordered stretch occupies residues 233–261; sequence DEDGDQDAQGGQQLDDLTLETTQNPDESI. Residues 239 to 248 are compositionally biased toward low complexity; sequence DAQGGQQLDD. Positions 252–261 are enriched in polar residues; that stretch reads ETTQNPDESI. The tract at residues 349-496 is C-terminal cyclin fold; that stretch reads VVKPTIVDYA…LLTLRLTFQL (148 aa).

The protein belongs to the RRN7/TAF1B family.

It localises to the nucleus. The protein resides in the nucleolus. Component of RNA polymerase I core factor complex that acts as a GTF2B/TFIIB-like factor and plays a key role in multiple steps during transcription initiation such as pre-initiation complex (PIC) assembly and postpolymerase recruitment events in polymerase I (Pol I) transcription. Binds rDNA promoters and plays a role in Pol I recruitment. The chain is TATA box-binding protein-associated factor RNA polymerase I subunit B from Caenorhabditis elegans.